The chain runs to 110 residues: UPF0102 protein HH_1751 (110 aa).

The protein belongs to the UPF0102 family.

The protein is UPF0102 protein HH_1751 of Helicobacter hepaticus (strain ATCC 51449 / 3B1).